A 552-amino-acid chain; its full sequence is 5'-AMP-activated protein kinase catalytic subunit alpha-2 (552 aa).

Positions 16-268 constitute a Protein kinase domain; that stretch reads YVLGDTLGVG…IKDIREHEWF (253 aa). ATP is bound by residues 22-30 and lysine 45; that span reads LGVGTFGKV. Residue aspartate 139 is the Proton acceptor of the active site. Threonine 172 is subject to Phosphothreonine; by LKB1 and CaMKK2. Threonine 258 carries the post-translational modification Phosphothreonine. The interval 291 to 376 is AIS; the sequence is EAVKEVCEKF…PERMPPLIAD (86 aa). At serine 377 the chain carries Phosphoserine. The interval 477–521 is disordered; the sequence is VEQRSGSSTPQRSCSAAGLHRPRSSFDSTTAESHSLSGSLTGSLT. The span at 480–490 shows a compositional bias: polar residues; sequence RSGSSTPQRSC. At serine 491 the chain carries Phosphoserine. Over residues 501–510 the composition is skewed to polar residues; that stretch reads SFDSTTAESH. Residues 511 to 521 are compositionally biased toward low complexity; that stretch reads SLSGSLTGSLT.

It belongs to the protein kinase superfamily. CAMK Ser/Thr protein kinase family. SNF1 subfamily. In terms of assembly, AMPK is a heterotrimer of an alpha catalytic subunit (PRKAA1 or PRKAA2), a beta (PRKAB1 or PRKAB2) and a gamma non-catalytic subunits (PRKAG1, PRKAG2 or PRKAG3). Interacts with FNIP1 and FNIP2. Associates with internalized insulin receptor/INSR complexes on Golgi/endosomal membranes; PRKAA2/AMPK2 together with ATIC and HACD3/PTPLAD1 is proposed to be part of a signaling network regulating INSR autophosphorylation and endocytosis. Interacts with ARF6. The phosphorylated form at Thr-172 mediated by CamKK2 interacts with ACSS2. Mg(2+) is required as a cofactor. Ubiquitinated. In terms of processing, phosphorylated at Thr-172 by STK11/LKB1 in complex with STE20-related adapter-alpha (STRADA) pseudo kinase and CAB39. Also phosphorylated at Thr-172 by CAMKK2; triggered by a rise in intracellular calcium ions, without detectable changes in the AMP/ATP ratio. CAMKK1 can also phosphorylate Thr-172, but at much lower level. Dephosphorylated by protein phosphatase 2A and 2C (PP2A and PP2C). Phosphorylated by ULK1; leading to negatively regulate AMPK activity and suggesting the existence of a regulatory feedback loop between ULK1 and AMPK. Dephosphorylated by PPM1A and PPM1B at Thr-172 (mediated by STK11/LKB1).

The protein resides in the cytoplasm. The protein localises to the nucleus. It catalyses the reaction L-seryl-[protein] + ATP = O-phospho-L-seryl-[protein] + ADP + H(+). It carries out the reaction L-threonyl-[protein] + ATP = O-phospho-L-threonyl-[protein] + ADP + H(+). The enzyme catalyses L-seryl-[acetyl-CoA carboxylase] + ATP = O-phospho-L-seryl-[acetyl-CoA carboxylase] + ADP + H(+). The catalysed reaction is L-seryl-[3-hydroxy-3-methylglutaryl-coenzyme A reductase] + ATP = O-phospho-L-seryl-[3-hydroxy-3-methylglutaryl-coenzyme A reductase] + ADP + H(+). Its activity is regulated as follows. Activated by phosphorylation on Thr-172. Binding of AMP to non-catalytic gamma subunit (PRKAG1, PRKAG2 or PRKAG3) results in allosteric activation, inducing phosphorylation on Thr-172. AMP-binding to gamma subunit also sustains activity by preventing dephosphorylation of Thr-172. ADP also stimulates Thr-172 phosphorylation, without stimulating already phosphorylated AMPK. ATP promotes dephosphorylation of Thr-172, rendering the enzyme inactive. Under physiological conditions AMPK mainly exists in its inactive form in complex with ATP, which is much more abundant than AMP. AMPK is activated by antihyperglycemic drug metformin, a drug prescribed to patients with type 2 diabetes: in vivo, metformin seems to mainly inhibit liver gluconeogenesis. However, metformin can be used to activate AMPK in muscle and other cells in culture or ex vivo. Selectively inhibited by compound C (6-[4-(2-Piperidin-1-yl-ethoxy)-phenyl)]-3-pyridin-4-yl-pyyrazolo[1,5-a] pyrimidine. Activated by resveratrol, a natural polyphenol present in red wine, and S17834, a synthetic polyphenol. Salicylate/aspirin directly activates kinase activity, primarily by inhibiting Thr-172 dephosphorylation. Functionally, catalytic subunit of AMP-activated protein kinase (AMPK), an energy sensor protein kinase that plays a key role in regulating cellular energy metabolism. In response to reduction of intracellular ATP levels, AMPK activates energy-producing pathways and inhibits energy-consuming processes: inhibits protein, carbohydrate and lipid biosynthesis, as well as cell growth and proliferation. AMPK acts via direct phosphorylation of metabolic enzymes, and by longer-term effects via phosphorylation of transcription regulators. Regulates lipid synthesis by phosphorylating and inactivating lipid metabolic enzymes such as ACACA, ACACB, GYS1, HMGCR and LIPE; regulates fatty acid and cholesterol synthesis by phosphorylating acetyl-CoA carboxylase (ACACA and ACACB) and hormone-sensitive lipase (LIPE) enzymes, respectively. Promotes lipolysis of lipid droplets by mediating phosphorylation of isoform 1 of CHKA (CHKalpha2). Regulates insulin-signaling and glycolysis by phosphorylating IRS1, PFKFB2 and PFKFB3. Involved in insulin receptor/INSR internalization. AMPK stimulates glucose uptake in muscle by increasing the translocation of the glucose transporter SLC2A4/GLUT4 to the plasma membrane, possibly by mediating phosphorylation of TBC1D4/AS160. Regulates transcription and chromatin structure by phosphorylating transcription regulators involved in energy metabolism such as CRTC2/TORC2, FOXO3, histone H2B, HDAC5, MEF2C, MLXIPL/ChREBP, EP300, HNF4A, p53/TP53, SREBF1, SREBF2 and PPARGC1A. Acts as a key regulator of glucose homeostasis in liver by phosphorylating CRTC2/TORC2, leading to CRTC2/TORC2 sequestration in the cytoplasm. In response to stress, phosphorylates 'Ser-36' of histone H2B (H2BS36ph), leading to promote transcription. Acts as a key regulator of cell growth and proliferation by phosphorylating FNIP1, TSC2, RPTOR, WDR24 and ATG1/ULK1: in response to nutrient limitation, negatively regulates the mTORC1 complex by phosphorylating RPTOR component of the mTORC1 complex and by phosphorylating and activating TSC2. Also phosphorylates and inhibits GATOR2 subunit WDR24 in response to nutrient limitation, leading to suppress glucose-mediated mTORC1 activation. In response to energetic stress, phosphorylates FNIP1, inactivating the non-canonical mTORC1 signaling, thereby promoting nuclear translocation of TFEB and TFE3, and inducing transcription of lysosomal or autophagy genes. In response to nutrient limitation, promotes autophagy by phosphorylating and activating ATG1/ULK1. In that process, it also activates WDR45/WIPI4. Phosphorylates CASP6, thereby preventing its autoprocessing and subsequent activation. AMPK also acts as a regulator of circadian rhythm by mediating phosphorylation of CRY1, leading to destabilize it. May regulate the Wnt signaling pathway by phosphorylating CTNNB1, leading to stabilize it. Also acts as a regulator of cellular polarity by remodeling the actin cytoskeleton; probably by indirectly activating myosin. Also phosphorylates CFTR, EEF2K, KLC1, NOS3 and SLC12A1. Plays an important role in the differential regulation of pro-autophagy (composed of PIK3C3, BECN1, PIK3R4 and UVRAG or ATG14) and non-autophagy (composed of PIK3C3, BECN1 and PIK3R4) complexes, in response to glucose starvation. Can inhibit the non-autophagy complex by phosphorylating PIK3C3 and can activate the pro-autophagy complex by phosphorylating BECN1. Upon glucose starvation, promotes ARF6 activation in a kinase-independent manner leading to cell migration. Upon glucose deprivation mediates the phosphorylation of ACSS2 at 'Ser-659', which exposes the nuclear localization signal of ACSS2, required for its interaction with KPNA1 and nuclear translocation. Upon stress, regulates mitochondrial fragmentation through phosphorylation of MTFR1L. This chain is 5'-AMP-activated protein kinase catalytic subunit alpha-2, found in Homo sapiens (Human).